The chain runs to 216 residues: Uracil phosphoribosyltransferase (216 aa).

5-phospho-alpha-D-ribose 1-diphosphate is bound by residues Arg-85, Arg-110, and 135 to 143 (DPMVATGYS). Residues Ile-200 and 205–207 (GDA) each bind uracil. Asp-206 is a 5-phospho-alpha-D-ribose 1-diphosphate binding site.

The protein belongs to the UPRTase family. The cofactor is Mg(2+).

It carries out the reaction UMP + diphosphate = 5-phospho-alpha-D-ribose 1-diphosphate + uracil. Its pathway is pyrimidine metabolism; UMP biosynthesis via salvage pathway; UMP from uracil: step 1/1. Its activity is regulated as follows. Allosterically activated by GTP. Catalyzes the conversion of uracil and 5-phospho-alpha-D-ribose 1-diphosphate (PRPP) to UMP and diphosphate. This Burkholderia cenocepacia (strain ATCC BAA-245 / DSM 16553 / LMG 16656 / NCTC 13227 / J2315 / CF5610) (Burkholderia cepacia (strain J2315)) protein is Uracil phosphoribosyltransferase.